A 677-amino-acid polypeptide reads, in one-letter code: WD repeat-containing protein 48 (677 aa).

Phosphotyrosine is present on tyrosine 28. WD repeat units follow at residues 28–67 (YNRNGVNALQLDPALNRLFTAGRDSIIRIWSVNQHKQDPY), 73–112 (HHTDWVNDIVLCCNGKTLISASSDTTVKVWNAHKGFCMST), 115–154 (THKDYVKALAYAKDKELVASAGLDRQIFLWDVNTLTALTA), 166–205 (GNKDSIYSLAMNQLGTIIVSGSTEKVLRVWDPRTCAKLMK), 208–247 (GHTDNVKALLLNRDGTQCLSGSSDGTIRLWSLGQQRCIAT), 250–289 (VHDEGVWALQVNDAFTHVYSGGRDRKIYCTDLRNPDIRVL), 292–334 (EEKA…NFRA), and 358–397 (KGGASIIQCHILNDKRHILTKDTNNNVAYWDVLKACKVED). Lysine 214 is modified (N6-acetyllysine). Lysine 578 carries the N6-acetyllysine modification. A disordered region spans residues 607-628 (LDNESQTTSSSNNEKPGEQEKE). A compositionally biased stretch (low complexity) spans 609 to 620 (NESQTTSSSNNE). Threonine 613 is modified (phosphothreonine).

It belongs to the WD repeat WDR48 family. Interacts with USP46. Interacts with USP1. Interacts with USP12. Component of the USP12-WDR20-WDR48 deubiquitinating complex. Component of the USP12-DMWD-WDR48 deubiquitinating complex. Interacts with PHLPP1. Interacts with RAD51AP1; the interaction is direct and promotes formation of a trimeric complex with RAD51 via RAD51AP1. Interacts with ATAD5; the interaction regulates USP1-mediated PCNA deubiquitination. Interacts with RAD51; the interaction is enhanced under replication stress. Interacts with ITCH; the interaction is more efficient when both USP12 and WDR48/UAF1 are involved and may facilitate recruitment of the USP12 deubiquitinating complex to Notch. In terms of assembly, (Microbial infection) Interacts with papillomavirus HPV11 E1 protein. As to quaternary structure, (Microbial infection) Interacts with Saimiriine herpesvirus TIP protein. (Microbial infection) Interacts with human cytomegalovirus protein UL138. In terms of assembly, (Microbial infection) Interacts with Epstein-Barr virus protein EBNA3. In terms of tissue distribution, ubiquitous.

The protein localises to the nucleus. The protein resides in the cytoplasm. It localises to the lysosome. Its subcellular location is the late endosome. Functionally, regulator of deubiquitinating complexes, which acts as a strong activator of USP1, USP12 and USP46. Enhances the USP1-mediated deubiquitination of FANCD2; USP1 being almost inactive by itself. Activates deubiquitination by increasing the catalytic turnover without increasing the affinity of deubiquitinating enzymes for the substrate. Also activates deubiquitinating activity of complexes containing USP12. In complex with USP12, acts as a potential tumor suppressor by positively regulating PHLPP1 stability. Docks at the distal end of the USP12 fingers domain and induces a cascade of structural changes leading to the activation of the enzyme. Together with RAD51AP1, promotes DNA repair by stimulating RAD51-mediated homologous recombination. Binds single-stranded DNA (ssDNA) and double-stranded DNA (dsDNA). DNA-binding is required both for USP1-mediated deubiquitination of FANCD2 and stimulation of RAD51-mediated homologous recombination: both WDR48/UAF1 and RAD51AP1 have coordinated role in DNA-binding during these processes. Together with ATAD5 and by regulating USP1 activity, has a role in PCNA-mediated translesion synthesis (TLS) by deubiquitinating monoubiquitinated PCNA. Together with ATAD5, has a role in recruiting RAD51 to stalled forks during replication stress. In terms of biological role, (Microbial infection) In case of infection by Herpesvirus saimiri, may play a role in vesicular transport or membrane fusion events necessary for transport to lysosomes. Induces lysosomal vesicle formation via interaction with Herpesvirus saimiri tyrosine kinase-interacting protein (TIP). Subsequently, TIP recruits tyrosine-protein kinase LCK, resulting in down-regulation of T-cell antigen receptor TCR. May play a role in generation of enlarged endosomal vesicles via interaction with TIP. In case of infection by papillomavirus HPV11, promotes the maintenance of the viral genome via its interaction with HPV11 helicase E1. The polypeptide is WD repeat-containing protein 48 (Homo sapiens (Human)).